Consider the following 335-residue polypeptide: Casein kinase I (335 aa).

One can recognise a Protein kinase domain in the interval 9–278 (YRLGRKIGSG…LRRLFKDLFF (270 aa)). ATP-binding positions include 15 to 23 (IGSGSFGDI) and K38. Catalysis depends on D128, which acts as the Proton acceptor. The segment at 304–335 (RSMVNQGAESGNQWRRDASGRDPLGRLPQLEP) is disordered. The span at 305-316 (SMVNQGAESGNQ) shows a compositional bias: polar residues. Basic and acidic residues predominate over residues 317–327 (WRRDASGRDPL).

It belongs to the protein kinase superfamily. CK1 Ser/Thr protein kinase family. Casein kinase I subfamily.

It carries out the reaction L-seryl-[protein] + ATP = O-phospho-L-seryl-[protein] + ADP + H(+). The enzyme catalyses L-threonyl-[protein] + ATP = O-phospho-L-threonyl-[protein] + ADP + H(+). Functionally, casein kinases are operationally defined by their preferential utilization of acidic proteins such as caseins as substrates. It can phosphorylate a large number of proteins. This is Casein kinase I from Eimeria tenella (Coccidian parasite).